The chain runs to 358 residues: tRNA-specific 2-thiouridylase MnmA (358 aa).

ATP contacts are provided by residues 7–14 and leucine 33; that span reads AMSGGVDS. The active-site Nucleophile is the cysteine 101. Residues cysteine 101 and cysteine 197 are joined by a disulfide bond. Glycine 125 provides a ligand contact to ATP. The interval 147–149 is interaction with tRNA; the sequence is KDQ. The active-site Cysteine persulfide intermediate is the cysteine 197.

Belongs to the MnmA/TRMU family.

Its subcellular location is the cytoplasm. It catalyses the reaction S-sulfanyl-L-cysteinyl-[protein] + uridine(34) in tRNA + AH2 + ATP = 2-thiouridine(34) in tRNA + L-cysteinyl-[protein] + A + AMP + diphosphate + H(+). Functionally, catalyzes the 2-thiolation of uridine at the wobble position (U34) of tRNA, leading to the formation of s(2)U34. In Rickettsia typhi (strain ATCC VR-144 / Wilmington), this protein is tRNA-specific 2-thiouridylase MnmA.